Reading from the N-terminus, the 231-residue chain is Putative cobalt transport protein CbiM 1 (231 aa).

Transmembrane regions (helical) follow at residues 8 to 28 (LPLQ…AYGI), 41 to 61 (TLPL…LKMP), 74 to 94 (GLGA…IVLV), 97 to 117 (ALFL…SMGI), 138 to 158 (IVNV…ITSI), and 175 to 195 (FITF…IEGI).

Belongs to the CbiM family. In terms of assembly, forms an energy-coupling factor (ECF) transporter complex composed of an ATP-binding protein (A component, CbiO), a transmembrane protein (T component, CbiQ) and 2 possible substrate-capture proteins (S components, CbiM and CbiN) of unknown stoichimetry.

It is found in the cell membrane. The protein operates within cofactor biosynthesis; adenosylcobalamin biosynthesis. Part of the energy-coupling factor (ECF) transporter complex CbiMNOQ involved in cobalt import. In Methanosphaerula palustris (strain ATCC BAA-1556 / DSM 19958 / E1-9c), this protein is Putative cobalt transport protein CbiM 1.